The following is a 102-amino-acid chain: Large ribosomal subunit protein bL21 (102 aa).

Belongs to the bacterial ribosomal protein bL21 family. In terms of assembly, part of the 50S ribosomal subunit. Contacts protein L20.

Functionally, this protein binds to 23S rRNA in the presence of protein L20. The protein is Large ribosomal subunit protein bL21 of Campylobacter hominis (strain ATCC BAA-381 / DSM 21671 / CCUG 45161 / LMG 19568 / NCTC 13146 / CH001A).